Here is an 89-residue protein sequence, read N- to C-terminus: Probable monothiol glutaredoxin GrlA (89 aa).

The Glutaredoxin domain maps to 1–89; the sequence is MLYMKGTPKM…EPMLRDAVAA (89 aa). Glutathione is bound at residue Lys5. Cys13 contacts [2Fe-2S] cluster. Residues Arg42, Phe54, and 67-68 each bind glutathione; that span reads SD.

Belongs to the glutaredoxin family. Monothiol subfamily.

The protein is Probable monothiol glutaredoxin GrlA (grlA) of Legionella pneumophila subsp. pneumophila (strain Philadelphia 1 / ATCC 33152 / DSM 7513).